We begin with the raw amino-acid sequence, 198 residues long: Adenylate kinase (198 aa).

10–15 (GAGKGT) lines the ATP pocket. The interval 30 to 59 (STGDMLRAAVQAGSEVGKRAKAVMDAGELV) is NMP. AMP-binding positions include Thr31, Arg36, 57 to 59 (ELV), 85 to 88 (GYPR), and Gln92. Positions 126-142 (KRAEDAKAAGQPVRKDD) are LID. Arg127 contributes to the ATP binding site. Arg139 and Arg150 together coordinate AMP. Ala178 lines the ATP pocket.

The protein belongs to the adenylate kinase family. In terms of assembly, monomer.

It localises to the cytoplasm. It catalyses the reaction AMP + ATP = 2 ADP. The protein operates within purine metabolism; AMP biosynthesis via salvage pathway; AMP from ADP: step 1/1. Catalyzes the reversible transfer of the terminal phosphate group between ATP and AMP. Plays an important role in cellular energy homeostasis and in adenine nucleotide metabolism. The protein is Adenylate kinase of Mesorhizobium japonicum (strain LMG 29417 / CECT 9101 / MAFF 303099) (Mesorhizobium loti (strain MAFF 303099)).